The sequence spans 329 residues: Beta-ketoacyl-[acyl-carrier-protein] synthase III (329 aa).

Residues cysteine 123 and histidine 256 contribute to the active site. The segment at 257-261 (QANIR) is ACP-binding. The active site involves asparagine 286.

This sequence belongs to the thiolase-like superfamily. FabH family. In terms of assembly, homodimer.

Its subcellular location is the cytoplasm. The catalysed reaction is malonyl-[ACP] + acetyl-CoA + H(+) = 3-oxobutanoyl-[ACP] + CO2 + CoA. It functions in the pathway lipid metabolism; fatty acid biosynthesis. Functionally, catalyzes the condensation reaction of fatty acid synthesis by the addition to an acyl acceptor of two carbons from malonyl-ACP. Catalyzes the first condensation reaction which initiates fatty acid synthesis and may therefore play a role in governing the total rate of fatty acid production. Possesses both acetoacetyl-ACP synthase and acetyl transacylase activities. Its substrate specificity determines the biosynthesis of branched-chain and/or straight-chain of fatty acids. This is Beta-ketoacyl-[acyl-carrier-protein] synthase III from Burkholderia thailandensis (strain ATCC 700388 / DSM 13276 / CCUG 48851 / CIP 106301 / E264).